We begin with the raw amino-acid sequence, 355 residues long: Probable butyrate kinase (355 aa).

This sequence belongs to the acetokinase family.

The protein localises to the cytoplasm. The catalysed reaction is butanoate + ATP = butanoyl phosphate + ADP. This chain is Probable butyrate kinase, found in Listeria innocua serovar 6a (strain ATCC BAA-680 / CLIP 11262).